A 2488-amino-acid chain; its full sequence is Neuron navigator 2 (2488 aa).

In terms of domain architecture, Calponin-homology (CH) spans 85-192 (GFDTQIYTDW…LFFSLSRYKQ (108 aa)). 3 stretches are compositionally biased toward low complexity: residues 194–204 (QQQPQKQHLSS), 221–247 (QAGT…PHQQ), and 255–267 (QSSA…SQSK). Disordered regions lie at residues 194–675 (QQQP…GSNT) and 706–727 (TEGN…SHFT). Residues 299-315 (GGSTTANNRRSQSFNNY) are compositionally biased toward polar residues. Over residues 356–369 (SGSSSTPTNCSTSS) the composition is skewed to low complexity. Over residues 384 to 396 (KSLSVKHSATVSM) the composition is skewed to polar residues. Residues 401–410 (PPGPEAPRPT) show a composition bias toward pro residues. Positions 492 to 506 (RTFSRALTNKKSSLK) are enriched in polar residues. Residues 498–531 (LTNKKSSLKGNEKEKEKQQREKDKEKSKDLAKRA) adopt a coiled-coil conformation. Over residues 507 to 547 (GNEKEKEKQQREKDKEKSKDLAKRASVTERLDLKEEPKEDP) the composition is skewed to basic and acidic residues. The segment covering 592-606 (MKSMPGKSPSAPAPS) has biased composition (low complexity). Residues 615–626 (GKLSSGLPQQKP) show a composition bias toward polar residues. Composition is skewed to low complexity over residues 633–642 (SSSSSSLASS) and 657–675 (SSQT…GSNT). Residues 706 to 719 (TEGNVTAESSSTGV) are compositionally biased toward polar residues. Residues 743 to 771 (EARRLRTVKNIADLRQNLEETMSSLRGTQ) are a coiled coil. Disordered regions lie at residues 804 to 824 (LSWR…PSMG), 939 to 1151 (LGLG…QSGS), 1177 to 1200 (KSSA…NQDD), 1213 to 1283 (YRSL…SDNE), 1295 to 1338 (PAAQ…PIAT), 1355 to 1412 (MTQQ…TNAS), 1440 to 1460 (SLSS…ASSK), 1473 to 1560 (VKTT…VTSP), and 1591 to 1629 (SLSN…SFRD). The span at 939–985 (LGLGDADSWDDSSSVSSGISDTIDNLSTDDINTSSSISSYANTPASS) shows a compositional bias: low complexity. Positions 1091–1102 (KTDDAKVSEKGR) are enriched in basic and acidic residues. Polar residues predominate over residues 1130–1142 (PSSSRTPTANANS). A compositionally biased stretch (low complexity) spans 1220–1245 (SKSNSRNGAGNRSSTSSIDSNISSKS). Over residues 1299–1309 (PVSSPAQTSLQ) the composition is skewed to polar residues. Low complexity-rich tracts occupy residues 1363–1380 (SPSG…PLYS) and 1388–1404 (SPLA…PSNS). A compositionally biased stretch (polar residues) spans 1440-1456 (SLSSGGVPSHNSSTGLI). Residues 1477-1489 (LSESPLSSPAASP) show a composition bias toward low complexity. Residues Ser-1480, Ser-1484, and Ser-1488 each carry the phosphoserine modification. Basic and acidic residues-rich tracts occupy residues 1498–1510 (RKQD…DRNT) and 1526–1535 (TQEDAKEWLR). Residues 1549–1560 (SPFSSGSSVTSP) show a composition bias toward low complexity. The stretch at 1686–1773 (EEKCQSEIRK…AAAQAAINGV (88 aa)) forms a coiled coil. Disordered stretches follow at residues 1790 to 1887 (ADLR…LRNS) and 1951 to 1985 (AEND…MGLS). Composition is skewed to polar residues over residues 1800–1820 (SDSV…SNIE), 1875–1887 (NGST…LRNS), and 1959–1985 (ESQG…MGLS). Residues 1897 to 1964 (MDSEAETVMQ…RLKSESQGSG (68 aa)) adopt a coiled-coil conformation. Ser-1977 is modified (phosphoserine). 2157-2164 (GPSGTGKT) is an ATP binding site. The segment at 2423–2488 (DGYSMPREGS…ILDSSLESTL (66 aa)) is disordered. Positions 2460–2473 (YSSPQSYDSDSNSN) are enriched in low complexity.

It belongs to the Nav/unc-53 family. In terms of tissue distribution, highly expressed in the brain, kidney and liver. Also expressed in the thyroid, mammary gland, spinal cord, heart, placenta and lung. Abundantly expressed in colon cancers.

It localises to the nucleus. It catalyses the reaction ATP + H2O = ADP + phosphate + H(+). Possesses 3' to 5' helicase activity and exonuclease activity. Involved in neuronal development, specifically in the development of different sensory organs. The polypeptide is Neuron navigator 2 (NAV2) (Homo sapiens (Human)).